The chain runs to 117 residues: Large ribosomal subunit protein uL18 (117 aa).

This sequence belongs to the universal ribosomal protein uL18 family. As to quaternary structure, part of the 50S ribosomal subunit; part of the 5S rRNA/L5/L18/L25 subcomplex. Contacts the 5S and 23S rRNAs.

Functionally, this is one of the proteins that bind and probably mediate the attachment of the 5S RNA into the large ribosomal subunit, where it forms part of the central protuberance. This Vibrio proteolyticus (Aeromonas proteolytica) protein is Large ribosomal subunit protein uL18.